The sequence spans 446 residues: Chromosomal replication initiator protein DnaA (446 aa).

Positions 1–72 are domain I, interacts with DnaA modulators; sequence MKNISDLWNQ…ADTIYDLTGE (72 aa). A domain II region spans residues 72–109; it reads EELSIKFVIPQNQNEEDFMPKSPIKKMSKEEPADFPQN. The segment at 110-326 is domain III, AAA+ region; it reads MLNPKYTFDT…GALIRVVAYS (217 aa). ATP contacts are provided by glycine 154, glycine 156, lysine 157, and threonine 158. The domain IV, binds dsDNA stretch occupies residues 327-446; that stretch reads SLINKDINAD…QIKEIKEQLR (120 aa).

Belongs to the DnaA family. In terms of assembly, oligomerizes as a right-handed, spiral filament on DNA at oriC.

The protein resides in the cytoplasm. Its function is as follows. Plays an essential role in the initiation and regulation of chromosomal replication. ATP-DnaA binds to the origin of replication (oriC) to initiate formation of the DNA replication initiation complex once per cell cycle. Binds the DnaA box (a 9 base pair repeat at the origin) and separates the double-stranded (ds)DNA. Forms a right-handed helical filament on oriC DNA; dsDNA binds to the exterior of the filament while single-stranded (ss)DNA is stabiized in the filament's interior. The ATP-DnaA-oriC complex binds and stabilizes one strand of the AT-rich DNA unwinding element (DUE), permitting loading of DNA polymerase. After initiation quickly degrades to an ADP-DnaA complex that is not apt for DNA replication. Binds acidic phospholipids. This chain is Chromosomal replication initiator protein DnaA, found in Bacillus licheniformis (strain ATCC 14580 / DSM 13 / JCM 2505 / CCUG 7422 / NBRC 12200 / NCIMB 9375 / NCTC 10341 / NRRL NRS-1264 / Gibson 46).